The chain runs to 621 residues: MYDVIVVGAGHAGCEAILAAARMGATCLLITSDLTAIARMSCNPAIGGMAKGQITREIDALGGEMAKAIDATGIQFRLLNRSKGPAMHSPRAQADRTLYSLYMRTIIEREPNIDLLQDTVIAIETKGECFAGVRITSSRVIEGKSAILTCGTFLNGLIHVGMNHFAGGRTIAEPPVVGLTENLCAHGFQAGRLKTGTPPRIDSRSIDYRKVDEQPGDIEPILFSFESKGALQSKQVSCFITKTTEETHAILRKGFERSPLFTGKVQGIGPRYCPSVEDKIFRFPDKNSHHIFLEPEGIDTNEMYVNGFSTSLPEDIQLEGLHSIPGLEQVKMIRPGYAIEYDYFYPHQIQATLETRLIENLYFAGQINGTSGYEEAAAQGLMAGINAVLKMRKHEPLILTRSDAYIGVLIDDLITKETNEPYRMFTSSAEHRLLLRHDNADIRLHEFGYRVGLLPEHRYQATRQKIEQINAVKTLLSQIRLESGLANKLLQELEYGEVTGAQQVTTLLKRPRVTLAKLLATSPELHSQLSNISNNPLVYEQVEIDCKYEGYLKRDALVAEKIQRLEAHHIPALLDYHAIAGLSNEGREKLKKHRPENIGQASRILGVSPSDISILMVHLGR.

8 to 13 (GAGHAG) is an FAD binding site. Residue 269–283 (GPRYCPSVEDKIFRF) participates in NAD(+) binding.

It belongs to the MnmG family. Homodimer. Heterotetramer of two MnmE and two MnmG subunits. FAD serves as cofactor.

It is found in the cytoplasm. Its function is as follows. NAD-binding protein involved in the addition of a carboxymethylaminomethyl (cmnm) group at the wobble position (U34) of certain tRNAs, forming tRNA-cmnm(5)s(2)U34. The polypeptide is tRNA uridine 5-carboxymethylaminomethyl modification enzyme MnmG (Chlorobium chlorochromatii (strain CaD3)).